We begin with the raw amino-acid sequence, 620 residues long: Ran-binding protein 10 (620 aa).

The interval 1 to 34 (MAAATADPGAGSPQVGDSSGGATGCGLPSPGEQE) is disordered. Ala2 bears the N-acetylalanine mark. The 188-residue stretch at 35–222 (LSRRLQRLYP…VDANFGQQPF (188 aa)) folds into the B30.2/SPRY domain. The region spanning 253–285 (WQAVLQNMVSSYLVHHGYCATATAFARMTETPI) is the LisH domain. The CTLH domain maps to 291 to 348 (SIKNRQKIQKLVLEGRVGEAIETTQRFYPGLLEHNPNLLFMLKCRQFVEMVNGTDSEV). Residues 347-398 (EVRSLSSRSPKSQDSYPGSPSLSPRHGPTSSHTHNTGADSPSCSNGVASTKS) are compositionally biased toward polar residues. The disordered stretch occupies residues 347 to 459 (EVRSLSSRSP…TSDSEMEMEA (113 aa)). A Phosphoserine modification is found at Ser361. Position 362 is a phosphotyrosine (Tyr362). Phosphoserine occurs at positions 365, 367, 369, and 422. Residues 409–436 (SSSSSSSSSSSSSSPSSVNYSESNSTDS) show a composition bias toward low complexity. Residues 437–450 (TKSQPHSSTSNQET) are compositionally biased toward polar residues. Phosphoserine occurs at positions 451 and 453.

The protein belongs to the RANBP9/10 family. In terms of assembly, may form homodimers. Identified in the CTLH complex that contains GID4, RANBP9 and/or RANBP10, MKLN1, MAEA, RMND5A (or alternatively its paralog RMND5B), GID8, ARMC8, WDR26 and YPEL5. Within this complex, MAEA, RMND5A (or alternatively its paralog RMND5B), GID8, WDR26, and RANBP9 and/or RANBP10 form the catalytic core, while GID4, MKLN1, ARMC8 and YPEL5 have ancillary roles. Interacts with RAN and RANBP9. Interacts with the HGF receptor MET. Interacts with AR. Interacts with TUBB1. Interacts with YPEL5. May interact with TUBB5. Interacts with DDX4.

It localises to the cytoplasm. The protein resides in the cytosol. It is found in the nucleus. Functionally, may act as an adapter protein to couple membrane receptors to intracellular signaling pathways. Core component of the CTLH E3 ubiquitin-protein ligase complex that selectively accepts ubiquitin from UBE2H and mediates ubiquitination and subsequent proteasomal degradation of the transcription factor HBP1. Enhances dihydrotestosterone-induced transactivation activity of AR, as well as dexamethasone-induced transactivation activity of NR3C1, but does not affect estrogen-induced transactivation. Acts as a guanine nucleotide exchange factor (GEF) for RAN GTPase. May play an essential role in hemostasis and in maintaining microtubule dynamics with respect to both platelet shape and function. This Bos taurus (Bovine) protein is Ran-binding protein 10 (RANBP10).